A 62-amino-acid chain; its full sequence is uncharacterized protein (62 aa).

It is found in the plastid. The protein localises to the chloroplast. This is an uncharacterized protein from Porphyra purpurea (Red seaweed).